We begin with the raw amino-acid sequence, 247 residues long: Carboxy-S-adenosyl-L-methionine synthase (247 aa).

Residues Y39, 64–66 (GCS), 89–90 (DN), 117–118 (DI), N132, and R199 each bind S-adenosyl-L-methionine.

It belongs to the class I-like SAM-binding methyltransferase superfamily. Cx-SAM synthase family. In terms of assembly, homodimer.

The catalysed reaction is prephenate + S-adenosyl-L-methionine = carboxy-S-adenosyl-L-methionine + 3-phenylpyruvate + H2O. In terms of biological role, catalyzes the conversion of S-adenosyl-L-methionine (SAM) to carboxy-S-adenosyl-L-methionine (Cx-SAM). The polypeptide is Carboxy-S-adenosyl-L-methionine synthase (Cronobacter sakazakii (strain ATCC BAA-894) (Enterobacter sakazakii)).